A 104-amino-acid polypeptide reads, in one-letter code: UPF0145 protein cbdbA1711 (104 aa).

It belongs to the UPF0145 family.

This Dehalococcoides mccartyi (strain CBDB1) protein is UPF0145 protein cbdbA1711.